The following is a 265-amino-acid chain: Tryptophan synthase alpha chain (265 aa).

Catalysis depends on proton acceptor residues glutamate 49 and aspartate 60.

This sequence belongs to the TrpA family. Tetramer of two alpha and two beta chains.

The enzyme catalyses (1S,2R)-1-C-(indol-3-yl)glycerol 3-phosphate + L-serine = D-glyceraldehyde 3-phosphate + L-tryptophan + H2O. It functions in the pathway amino-acid biosynthesis; L-tryptophan biosynthesis; L-tryptophan from chorismate: step 5/5. Its function is as follows. The alpha subunit is responsible for the aldol cleavage of indoleglycerol phosphate to indole and glyceraldehyde 3-phosphate. The sequence is that of Tryptophan synthase alpha chain from Cupriavidus metallidurans (strain ATCC 43123 / DSM 2839 / NBRC 102507 / CH34) (Ralstonia metallidurans).